Here is a 114-residue protein sequence, read N- to C-terminus: Putative antiporter subunit mnhC2 (114 aa).

Transmembrane regions (helical) follow at residues 3–23 (LILL…ILSI), 25–45 (LIRI…IIMS), and 72–92 (AIVL…LVLI).

The protein belongs to the CPA3 antiporters (TC 2.A.63) subunit C family. May form a heterooligomeric complex that consists of seven subunits: mnhA2, mnhB2, mnhC2, mnhD2, mnhE2, mnhF2 and mnhG2.

It localises to the cell membrane. The polypeptide is Putative antiporter subunit mnhC2 (mnhC2) (Staphylococcus epidermidis (strain ATCC 12228 / FDA PCI 1200)).